The chain runs to 158 residues: Cyclic pyranopterin monophosphate synthase (158 aa).

Residues Leu76 to His78 and Met114 to Glu115 contribute to the substrate site. Residue Asp129 is part of the active site.

Belongs to the MoaC family. In terms of assembly, homohexamer; trimer of dimers.

The enzyme catalyses (8S)-3',8-cyclo-7,8-dihydroguanosine 5'-triphosphate = cyclic pyranopterin phosphate + diphosphate. The protein operates within cofactor biosynthesis; molybdopterin biosynthesis. In terms of biological role, catalyzes the conversion of (8S)-3',8-cyclo-7,8-dihydroguanosine 5'-triphosphate to cyclic pyranopterin monophosphate (cPMP). This is Cyclic pyranopterin monophosphate synthase from Shewanella loihica (strain ATCC BAA-1088 / PV-4).